Reading from the N-terminus, the 120-residue chain is Ribosome-binding factor A (120 aa).

The protein belongs to the RbfA family. In terms of assembly, monomer. Binds 30S ribosomal subunits, but not 50S ribosomal subunits or 70S ribosomes.

Its subcellular location is the cytoplasm. Its function is as follows. One of several proteins that assist in the late maturation steps of the functional core of the 30S ribosomal subunit. Associates with free 30S ribosomal subunits (but not with 30S subunits that are part of 70S ribosomes or polysomes). Required for efficient processing of 16S rRNA. May interact with the 5'-terminal helix region of 16S rRNA. The sequence is that of Ribosome-binding factor A from Clostridium botulinum (strain Okra / Type B1).